A 116-amino-acid chain; its full sequence is U11-theraphotoxin-Hhn1c (116 aa).

A signal peptide spans 1–21 (MNTVRVTFLLVFVLAVSLGQA). Positions 22–74 (DKDENRMEMQEKTEQGKSYLDFAENLLLQKLEELEAKLLEEDSEESRNSRQKR) are excised as a propeptide. The segment at 61-83 (EEDSEESRNSRQKRCIGEGVPCD) is disordered. 3 disulfides stabilise this stretch: Cys75–Cys90, Cys82–Cys95, and Cys89–Cys110.

Belongs to the neurotoxin 14 (magi-1) family. 01 (HNTX-16) subfamily. As to expression, expressed by the venom gland.

It localises to the secreted. Its function is as follows. Probable ion channel inhibitor. The sequence is that of U11-theraphotoxin-Hhn1c from Cyriopagopus hainanus (Chinese bird spider).